The following is a 126-amino-acid chain: RutC family protein y4sK (126 aa).

The protein belongs to the RutC family.

The protein is RutC family protein y4sK of Sinorhizobium fredii (strain NBRC 101917 / NGR234).